The chain runs to 141 residues: Nucleoside diphosphate kinase (141 aa).

ATP contacts are provided by K11, F59, R87, T93, R104, and N114. H117 acts as the Pros-phosphohistidine intermediate in catalysis.

The protein belongs to the NDK family. In terms of assembly, homotetramer. It depends on Mg(2+) as a cofactor.

Its subcellular location is the cytoplasm. The catalysed reaction is a 2'-deoxyribonucleoside 5'-diphosphate + ATP = a 2'-deoxyribonucleoside 5'-triphosphate + ADP. It carries out the reaction a ribonucleoside 5'-diphosphate + ATP = a ribonucleoside 5'-triphosphate + ADP. Its function is as follows. Major role in the synthesis of nucleoside triphosphates other than ATP. The ATP gamma phosphate is transferred to the NDP beta phosphate via a ping-pong mechanism, using a phosphorylated active-site intermediate. This Burkholderia thailandensis (strain ATCC 700388 / DSM 13276 / CCUG 48851 / CIP 106301 / E264) protein is Nucleoside diphosphate kinase.